We begin with the raw amino-acid sequence, 506 residues long: Dipeptide and tripeptide permease A (506 aa).

Residues 1-36 (MSTANNNSESTESVSMNAFKQPKAFYLIFSIELWER) are Cytoplasmic-facing. A helical membrane pass occupies residues 37 to 57 (FGYYGLQGIMAVYLVKMLGMS). Residues 58–61 (ETDS) lie on the Periplasmic side of the membrane. The chain crosses the membrane as a helical span at residues 62–82 (ITLFSSFSALVYGFVAIGGWL). At 83 to 91 (GDKVLGTKR) the chain is on the cytoplasmic side. The next 2 helical transmembrane spans lie at 92–112 (VIVL…YSGH) and 113–133 (SVAW…LFKA). The Cytoplasmic segment spans residues 134 to 155 (NPSALLSTCYAKDDPRLDGAFT). A helical transmembrane segment spans residues 156–176 (MYYMAVNIGSFFSMLATPVLA). At 177–180 (ANYG) the chain is on the periplasmic side. Residues 181–201 (WSVAFSLSVVGMILTLVNFMF) form a helical membrane-spanning segment. Over 202-222 (CRKWVSTQGSQPDFQPINLKK) the chain is Cytoplasmic. A helical membrane pass occupies residues 223 to 243 (LVITLAGIVVLVALSTWLLHN). The Periplasmic portion of the chain corresponds to 244 to 248 (QGVAR). Residues 249–269 (WILTIISLAVVAIFIKEMLAV) traverse the membrane as a helical segment. Residues 270–276 (SGAERRK) are Cytoplasmic-facing. A helical membrane pass occupies residues 277–297 (MIVALLLMLEAVVFFVLYNQM). Topologically, residues 298–322 (PTSLNFFAIRNVEHSILGFAFEPEQ) are periplasmic. The chain crosses the membrane as a helical span at residues 323 to 343 (YQALNPFWIMVASPLLAAVYN). Topologically, residues 344 to 354 (KMGDQLPMAHK) are cytoplasmic. Residues 355 to 375 (FAIGMVLCSGAFLVLPWGASM) form a helical membrane-spanning segment. Residues 376-385 (ANEQGIVSVN) are Periplasmic-facing. The helical transmembrane segment at 386 to 406 (WLILCYGLQSIGELMISGLGL) threads the bilayer. The Cytoplasmic segment spans residues 407–416 (AMVAQLVPQR). Residues 417-437 (LMGFIMGAWFLTSAGAAIIAG) form a helical membrane-spanning segment. Residues 438-461 (YVANMMAVPENVVDPHVSLEVYSN) are Periplasmic-facing. The helical transmembrane segment at 462 to 482 (VFMQIGIVTGIIAVLMMLTAP) threads the bilayer. Residues 483–506 (KLTRMTQDVATDVPADAATTTASA) are Cytoplasmic-facing.

Belongs to the major facilitator superfamily. Proton-dependent oligopeptide transporter (POT/PTR) (TC 2.A.17) family. DtpA subfamily.

It localises to the cell inner membrane. Functionally, proton-dependent permease that transports di- and tripeptides. The protein is Dipeptide and tripeptide permease A of Pectobacterium carotovorum subsp. carotovorum (strain PC1).